The following is a 90-amino-acid chain: Small ribosomal subunit protein uS17 (90 aa).

This sequence belongs to the universal ribosomal protein uS17 family. As to quaternary structure, part of the 30S ribosomal subunit.

Its function is as follows. One of the primary rRNA binding proteins, it binds specifically to the 5'-end of 16S ribosomal RNA. The chain is Small ribosomal subunit protein uS17 from Dehalococcoides mccartyi (strain ATCC BAA-2100 / JCM 16839 / KCTC 5957 / BAV1).